The primary structure comprises 358 residues: Putative spore germination protein YfkT (358 aa).

10 helical membrane passes run 10-30 (LFFG…ILMI), 36-56 (NAWH…WLMH), 81-101 (IIIL…IRFF), 107-127 (ILFL…FVAI), 143-163 (IFLF…ATQI), 179-199 (LQSG…PLLF), 210-230 (IFAI…SISV), 262-282 (IIAA…LYIV), 297-317 (AMYT…FLNT), and 326-346 (IKPI…YLII).

This sequence belongs to the amino acid-polyamine-organocation (APC) superfamily. Spore germination protein (SGP) (TC 2.A.3.9) family.

The protein localises to the cell membrane. In terms of biological role, may be involved in spore germination. The protein is Putative spore germination protein YfkT (yfkT) of Bacillus subtilis (strain 168).